The chain runs to 349 residues: KH domain-containing, RNA-binding, signal transduction-associated protein 2 (349 aa).

The KH domain occupies 65–135 (LIPVKQYPKF…HLSDELHVLI (71 aa)). 2 disordered regions span residues 182–284 (EDSG…DDQT) and 319–349 (PEEW…YGRY). Residues Arg-230 and Arg-240 each carry the omega-N-methylarginine modification. Over residues 340–349 (GYREHPYGRY) the composition is skewed to basic and acidic residues.

The protein belongs to the KHDRBS family. Self-associates to form homooligomers. Interacts with KHDRBS1/SAM68; heterooligomer formation of KHDRBS family proteins may modulate RNA substrate specificity. Interacts with RBMX. Interacts with SAFB, SFRS9 and YTHDC1. Interacts with FYN and PLCG1 (via SH3 domain). Interacts (phosphorylated) with FYN, GRB2, PLCG1 and RASA1 (via SH2 domain). Post-translationally, methylated. Tyrosine phosphorylated by FYN, PTK6 and SRC. Tyrosine phosphorylated by SRC during mitosis. In terms of tissue distribution, highly expressed in brain, lung, kidney and small intestine. Weakly expressed in placenta, liver, spleen, thymus, ovary and colon.

It is found in the nucleus. Its function is as follows. RNA-binding protein that plays a role in the regulation of alternative splicing and influences mRNA splice site selection and exon inclusion. Binds both poly(A) and poly(U) homopolymers. Phosphorylation by PTK6 inhibits its RNA-binding ability. Induces an increased concentration-dependent incorporation of exon in CD44 pre-mRNA by direct binding to purine-rich exonic enhancer. Can regulate alternative splicing of NRXN1 in the laminin G-like domain 6 containing the evolutionary conserved neurexin alternative spliced segment 4 (AS4) involved in neurexin selective targeting to postsynaptic partners. Regulates cell-type specific alternative splicing of NRXN1 at AS4 and acts synergystically with SAM68 in exon skipping. In contrast acts antagonistically with SAM68 in NRXN3 exon skipping at AS4. Its phosphorylation by FYN inhibits its ability to regulate splice site selection. May function as an adapter protein for Src kinases during mitosis. The sequence is that of KH domain-containing, RNA-binding, signal transduction-associated protein 2 (KHDRBS2) from Homo sapiens (Human).